The following is a 565-amino-acid chain: CTP synthase (565 aa).

The tract at residues 1–268 is amidoligase domain; that stretch reads MQTKYIFVTG…GELVVDRFYP (268 aa). Ser-14 lines the CTP pocket. Ser-14 contacts UTP. An ATP-binding site is contributed by 15–20; the sequence is SLGKGI. An L-glutamine-binding site is contributed by Tyr-55. Asp-72 serves as a coordination point for ATP. Mg(2+) contacts are provided by Asp-72 and Glu-142. CTP contacts are provided by residues 149–151, 189–194, and Lys-225; these read DIE and KTKPTQ. UTP-binding positions include 189 to 194 and Lys-225; that span reads KTKPTQ. One can recognise a Glutamine amidotransferase type-1 domain in the interval 301 to 543; the sequence is PIALVGKYVE…VRACTAYAHE (243 aa). An L-glutamine-binding site is contributed by Gly-363. The active-site Nucleophile; for glutamine hydrolysis is the Cys-390. L-glutamine contacts are provided by residues 391–394, Glu-414, and Arg-471; that span reads LGLQ. Active-site residues include His-516 and Glu-518. The disordered stretch occupies residues 545–565; the sequence is DLVTSPQPPERKAVPLASVDM.

This sequence belongs to the CTP synthase family. As to quaternary structure, homotetramer.

The catalysed reaction is UTP + L-glutamine + ATP + H2O = CTP + L-glutamate + ADP + phosphate + 2 H(+). It catalyses the reaction L-glutamine + H2O = L-glutamate + NH4(+). The enzyme catalyses UTP + NH4(+) + ATP = CTP + ADP + phosphate + 2 H(+). It functions in the pathway pyrimidine metabolism; CTP biosynthesis via de novo pathway; CTP from UDP: step 2/2. With respect to regulation, allosterically activated by GTP, when glutamine is the substrate; GTP has no effect on the reaction when ammonia is the substrate. The allosteric effector GTP functions by stabilizing the protein conformation that binds the tetrahedral intermediate(s) formed during glutamine hydrolysis. Inhibited by the product CTP, via allosteric rather than competitive inhibition. Functionally, catalyzes the ATP-dependent amination of UTP to CTP with either L-glutamine or ammonia as the source of nitrogen. Regulates intracellular CTP levels through interactions with the four ribonucleotide triphosphates. The polypeptide is CTP synthase (Salinibacter ruber (strain DSM 13855 / M31)).